The sequence spans 92 residues: uncharacterized protein (92 aa).

This is an uncharacterized protein from Dictyostelium discoideum (Social amoeba).